The sequence spans 835 residues: Protein translocase subunit SecA 1 (835 aa).

Residues Gln85, 103–107 (GEGKT), and Asp492 contribute to the ATP site. Positions 788-807 (VQGEAVHPSSDGEEAKKKPV) are disordered. Zn(2+)-binding residues include Cys819, Cys821, Cys830, and Cys831.

Belongs to the SecA family. In terms of assembly, monomer and homodimer. Part of the essential Sec protein translocation apparatus which comprises SecA, SecYEG and auxiliary proteins SecDF. Other proteins may also be involved. Zn(2+) is required as a cofactor.

The protein resides in the cell membrane. The protein localises to the cytoplasm. It carries out the reaction ATP + H2O + cellular proteinSide 1 = ADP + phosphate + cellular proteinSide 2.. Functionally, part of the Sec protein translocase complex. Interacts with the SecYEG preprotein conducting channel. Has a central role in coupling the hydrolysis of ATP to the transfer of proteins into and across the cell membrane, serving as an ATP-driven molecular motor driving the stepwise translocation of polypeptide chains across the membrane. In Bacillus anthracis, this protein is Protein translocase subunit SecA 1.